A 305-amino-acid chain; its full sequence is Ribonuclease Z (305 aa).

Zn(2+) is bound by residues His61, His63, Asp65, His66, His138, Asp208, and His266. The active-site Proton acceptor is Asp65.

It belongs to the RNase Z family. Homodimer. The cofactor is Zn(2+).

It catalyses the reaction Endonucleolytic cleavage of RNA, removing extra 3' nucleotides from tRNA precursor, generating 3' termini of tRNAs. A 3'-hydroxy group is left at the tRNA terminus and a 5'-phosphoryl group is left at the trailer molecule.. In terms of biological role, zinc phosphodiesterase, which displays some tRNA 3'-processing endonuclease activity. Probably involved in tRNA maturation, by removing a 3'-trailer from precursor tRNA. This chain is Ribonuclease Z, found in Methanosarcina mazei (strain ATCC BAA-159 / DSM 3647 / Goe1 / Go1 / JCM 11833 / OCM 88) (Methanosarcina frisia).